Consider the following 510-residue polypeptide: ATP synthase subunit alpha (510 aa).

170–177 (GDRQTGKT) is a binding site for ATP.

The protein belongs to the ATPase alpha/beta chains family. As to quaternary structure, F-type ATPases have 2 components, CF(1) - the catalytic core - and CF(0) - the membrane proton channel. CF(1) has five subunits: alpha(3), beta(3), gamma(1), delta(1), epsilon(1). CF(0) has three main subunits: a(1), b(2) and c(9-12). The alpha and beta chains form an alternating ring which encloses part of the gamma chain. CF(1) is attached to CF(0) by a central stalk formed by the gamma and epsilon chains, while a peripheral stalk is formed by the delta and b chains.

It localises to the cell inner membrane. The enzyme catalyses ATP + H2O + 4 H(+)(in) = ADP + phosphate + 5 H(+)(out). In terms of biological role, produces ATP from ADP in the presence of a proton gradient across the membrane. The alpha chain is a regulatory subunit. This chain is ATP synthase subunit alpha, found in Dictyoglomus thermophilum (strain ATCC 35947 / DSM 3960 / H-6-12).